The chain runs to 473 residues: Ribulose bisphosphate carboxylase large chain (473 aa).

Residues 1-2 (MS) constitute a propeptide that is removed on maturation. At Pro3 the chain carries N-acetylproline. N6,N6,N6-trimethyllysine is present on Lys14. Residues Asn123 and Thr173 each coordinate substrate. Lys175 serves as the catalytic Proton acceptor. Position 177 (Lys177) interacts with substrate. Positions 201, 203, and 204 each coordinate Mg(2+). An N6-carboxylysine modification is found at Lys201. The active-site Proton acceptor is the His294. Substrate is bound by residues Arg295, His327, and Ser379.

Belongs to the RuBisCO large chain family. Type I subfamily. In terms of assembly, heterohexadecamer of 8 large chains and 8 small chains; disulfide-linked. The disulfide link is formed within the large subunit homodimers. Mg(2+) serves as cofactor. Post-translationally, the disulfide bond which can form in the large chain dimeric partners within the hexadecamer appears to be associated with oxidative stress and protein turnover.

It localises to the plastid. The protein localises to the chloroplast. The catalysed reaction is 2 (2R)-3-phosphoglycerate + 2 H(+) = D-ribulose 1,5-bisphosphate + CO2 + H2O. It carries out the reaction D-ribulose 1,5-bisphosphate + O2 = 2-phosphoglycolate + (2R)-3-phosphoglycerate + 2 H(+). In terms of biological role, ruBisCO catalyzes two reactions: the carboxylation of D-ribulose 1,5-bisphosphate, the primary event in carbon dioxide fixation, as well as the oxidative fragmentation of the pentose substrate in the photorespiration process. Both reactions occur simultaneously and in competition at the same active site. The sequence is that of Ribulose bisphosphate carboxylase large chain from Monarda didyma (Scarlet bee-balm).